We begin with the raw amino-acid sequence, 101 residues long: Large ribosomal subunit protein uL23 (101 aa).

The protein belongs to the universal ribosomal protein uL23 family. Part of the 50S ribosomal subunit. Contacts protein L29, and trigger factor when it is bound to the ribosome.

Functionally, one of the early assembly proteins it binds 23S rRNA. One of the proteins that surrounds the polypeptide exit tunnel on the outside of the ribosome. Forms the main docking site for trigger factor binding to the ribosome. The protein is Large ribosomal subunit protein uL23 of Pseudarthrobacter chlorophenolicus (strain ATCC 700700 / DSM 12829 / CIP 107037 / JCM 12360 / KCTC 9906 / NCIMB 13794 / A6) (Arthrobacter chlorophenolicus).